The sequence spans 959 residues: MYFYFFNKYNLKILEKKLLIIFKYNISFKILHELLYLGYEYSFLYNYSLNIKDFSNFIYLLILYKNKINNIYNNKYYEIKNNYINVFLNNYYYLKVINKIQGILNNNLYNKINPIYSNLFLFFNNKIKIKYSQLQQLIGYKGYISNIKGMIYEKPVINNYINELNIYEYILSCYGSKKGIIDTALKTADSGYLTKRLINITSNFIIKELNCKSPFILKYILNMDIYGNIILPLNILRFKILQNNILNLNNGTFIYTKNTYITKYILNKLLNLYNRRNIYLNIKSVYLCNIYNNICNTCLNYKQLYKYNLGQHIGVISSEAISEPSTQMVLRTFHASSILKDKFNFNKYLIYKIYLYKLNINKIFKLIINFKKYINIKFNLIFLMNKILYNYNNILFEYKYILQNQYIKCNFIYNSISKNFKYNLNNIIIKYLNNVIKYYNYSNIQLLIKNIHNKWILYNIYTYYLYYYHIKFYNLYNKGIILNNNNNKYNVIYFLINYFNLFSNYYYKIYNNNYNFINSNYYFKMNFILKNFNNIQILNKLFYVNNIFIYYKYEKKLFIYLNIINNIIIKKYLNFYKYTYNKLFFIKKYNNFLYLYEIFKYNWYKYLLLNNKYNLYIIYNNYIKYLYKYNININLYFIKNLFYNNNNFIHNHIIYKNNYYIYNNNMNLYQYNKNILINNNLLYNKLFYNYINNNIYNLYLNDITIGLQSINIIFENKNIKDNIFFISNNIYVIFYIKYYNYLNNIIYIYNICNKYNINHYKYKLNFYSYIFEDISSILYSGYSLHTEFYSINKNLKYYFRFLLKSINIYQATKSSYIYVYNILIESILKQYSYQNIYLPSIYFELIIKKMLSCIKIISNNFKIFKYNDIISLQLINIINYSLNLNKHYIYKYEPIILGITKSILANSGFLTNISFQNTFKIISLNILNNKIDWLIDIKSKIILTDLLPVGNGWYRYLVN.

Zn(2+) is bound by residues Cys211, Cys288, Cys295, and Cys298.

The protein belongs to the RNA polymerase beta' chain family. RpoC2 subfamily. In plastids the minimal PEP RNA polymerase catalytic core is composed of four subunits: alpha, beta, beta', and beta''. When a (nuclear-encoded) sigma factor is associated with the core the holoenzyme is formed, which can initiate transcription. It depends on Zn(2+) as a cofactor.

It localises to the plastid. It is found in the apicoplast. It catalyses the reaction RNA(n) + a ribonucleoside 5'-triphosphate = RNA(n+1) + diphosphate. DNA-dependent RNA polymerase catalyzes the transcription of DNA into RNA using the four ribonucleoside triphosphates as substrates. The protein is DNA-directed RNA polymerase subunit beta'' of Plasmodium falciparum (isolate 3D7).